Here is a 429-residue protein sequence, read N- to C-terminus: Ribosomal RNA small subunit methyltransferase B (429 aa).

S-adenosyl-L-methionine is bound by residues 254–260 (CAAPGGK), aspartate 277, aspartate 303, and aspartate 322. The active-site Nucleophile is the cysteine 375.

The protein belongs to the class I-like SAM-binding methyltransferase superfamily. RsmB/NOP family.

The protein localises to the cytoplasm. The catalysed reaction is cytidine(967) in 16S rRNA + S-adenosyl-L-methionine = 5-methylcytidine(967) in 16S rRNA + S-adenosyl-L-homocysteine + H(+). Functionally, specifically methylates the cytosine at position 967 (m5C967) of 16S rRNA. The sequence is that of Ribosomal RNA small subunit methyltransferase B from Escherichia coli O17:K52:H18 (strain UMN026 / ExPEC).